We begin with the raw amino-acid sequence, 60 residues long: Large ribosomal subunit protein bL32 (60 aa).

Residues 1–25 form a disordered region; the sequence is MAVQQNKKSPSKRGMHRSHNALNVP. Residues 9–19 are compositionally biased toward basic residues; that stretch reads SPSKRGMHRSH.

This sequence belongs to the bacterial ribosomal protein bL32 family.

The sequence is that of Large ribosomal subunit protein bL32 from Polaromonas naphthalenivorans (strain CJ2).